We begin with the raw amino-acid sequence, 527 residues long: D-3-phosphoglycerate dehydrogenase (527 aa).

NAD(+) is bound by residues 149–150 (RV), aspartate 169, 228–230 (AAR), and aspartate 254. Arginine 230 is an active-site residue. Residue glutamate 259 is part of the active site. Histidine 278 (proton donor) is an active-site residue. 278 to 281 (HIAA) lines the NAD(+) pocket. The ACT domain maps to 453 to 527 (YIISLHEDKP…GIIDATYVEL (75 aa)).

Belongs to the D-isomer specific 2-hydroxyacid dehydrogenase family.

The catalysed reaction is (2R)-3-phosphoglycerate + NAD(+) = 3-phosphooxypyruvate + NADH + H(+). It participates in amino-acid biosynthesis; L-serine biosynthesis; L-serine from 3-phospho-D-glycerate: step 1/3. The sequence is that of D-3-phosphoglycerate dehydrogenase (serA) from Archaeoglobus fulgidus (strain ATCC 49558 / DSM 4304 / JCM 9628 / NBRC 100126 / VC-16).